A 450-amino-acid polypeptide reads, in one-letter code: Glucose-6-phosphate isomerase (450 aa).

The residue at position 38 (threonine 38) is a Phosphothreonine. Glutamate 290 serves as the catalytic Proton donor. Catalysis depends on residues histidine 311 and lysine 425.

Belongs to the GPI family.

It localises to the cytoplasm. The catalysed reaction is alpha-D-glucose 6-phosphate = beta-D-fructose 6-phosphate. Its pathway is carbohydrate biosynthesis; gluconeogenesis. The protein operates within carbohydrate degradation; glycolysis; D-glyceraldehyde 3-phosphate and glycerone phosphate from D-glucose: step 2/4. In terms of biological role, catalyzes the reversible isomerization of glucose-6-phosphate to fructose-6-phosphate. In Bacillus subtilis (strain 168), this protein is Glucose-6-phosphate isomerase.